The following is a 274-amino-acid chain: Thiamine kinase (274 aa).

The protein belongs to the thiamine kinase family.

The enzyme catalyses thiamine + ATP = thiamine phosphate + ADP + H(+). Its pathway is cofactor biosynthesis; thiamine diphosphate biosynthesis; thiamine phosphate from thiamine: step 1/1. Functionally, catalyzes the ATP-dependent phosphorylation of thiamine to thiamine phosphate. Is involved in thiamine salvage. The chain is Thiamine kinase from Escherichia coli O157:H7 (strain EC4115 / EHEC).